A 575-amino-acid polypeptide reads, in one-letter code: Malto-oligosyltrehalose trehalohydrolase (575 aa).

248-253 is a binding site for substrate; the sequence is RLDAVH. Residue D250 is the Nucleophile of the active site. E287 functions as the Proton donor in the catalytic mechanism. Residues 312–316 and 381–386 contribute to the substrate site; these read DDVHH and HDQVGN.

It belongs to the glycosyl hydrolase 13 family.

The protein localises to the cytoplasm. It carries out the reaction hydrolysis of (1-&gt;4)-alpha-D-glucosidic linkage in 4-alpha-D-[(1-&gt;4)-alpha-D-glucanosyl]n trehalose to yield trehalose and (1-&gt;4)-alpha-D-glucan.. It participates in glycan biosynthesis; trehalose biosynthesis. This Arthrobacter ramosus protein is Malto-oligosyltrehalose trehalohydrolase (treZ).